The chain runs to 711 residues: Forkhead box protein P1 (711 aa).

Over residues 1-19 the composition is skewed to polar residues; sequence MMQESGSEAKSNGSTIQNG. Residues 1–41 form a disordered region; it reads MMQESGSEAKSNGSTIQNGSSGGNHLLECGTLRDTRSNGEA. S115 carries the phosphoserine modification. 2 disordered regions span residues 273–292 and 305–332; these read HTAE…TSTC and MNPH…EHPH. Over residues 305–317 the composition is skewed to polar residues; the sequence is MNPHASTNGQLSV. Basic and acidic residues predominate over residues 320–332; that stretch reads PKRESLSHEEHPH. K321 is covalently cross-linked (Glycyl lysine isopeptide (Lys-Gly) (interchain with G-Cter in SUMO2)). The segment at 340–365 adopts a C2H2-type zinc-finger fold; it reads GVCKWPGCEAVCDDFPAFLKHLNSEH. The interval 382-403 is leucine-zipper; sequence VQQLELQLAKDKERLQAMMTHL. Glycyl lysine isopeptide (Lys-Gly) (interchain with G-Cter in SUMO2) cross-links involve residues K406 and K411. The interval 416-420 is CTBP1-binding; that stretch reads PLNLV. The segment covering 424 to 437 has biased composition (polar residues); it reads TLSKSASEASPQSL. Residues 424–456 form a disordered region; that stretch reads TLSKSASEASPQSLPHTPTTPTAPLTPVTQGPS. The segment covering 438-452 has biased composition (low complexity); sequence PHTPTTPTAPLTPVT. Residue K476 forms a Glycyl lysine isopeptide (Lys-Gly) (interchain with G-Cter in SUMO2) linkage. Residues 499-589 constitute a DNA-binding region (fork-head); sequence RPPFTYASLI…PQKISGNPSL (91 aa). The disordered stretch occupies residues 645-711; the sequence is EHTNSNESDS…EDEPVNEDME (67 aa). Residues 646 to 657 show a composition bias toward polar residues; that stretch reads HTNSNESDSSPG. Phosphothreonine is present on T687. The residue at position 692 (S692) is a Phosphoserine. The segment covering 701-711 has biased composition (acidic residues); the sequence is YEDEPVNEDME.

Forms homodimers and heterodimers with FOXP2 and FOXP4. Dimerization is required for DNA-binding. Self-associates. Interacts with CTBP1. Interacts with NCOR2 and AR. Interacts with FOXP2. Interacts with TBR1. Interacts with AURKA; this interaction facilitates the phosphorylation of FOXP1, which suppresses the expression of FBXL7. Interacts with ZMYM2.

The protein localises to the nucleus. In terms of biological role, transcriptional repressor. Can act with CTBP1 to synergistically repress transcription but CTPBP1 is not essential. Plays an important role in the specification and differentiation of lung epithelium. Acts cooperatively with FOXP4 to regulate lung secretory epithelial cell fate and regeneration by restricting the goblet cell lineage program; the function may involve regulation of AGR2. Essential transcriptional regulator of B-cell development. Involved in regulation of cardiac muscle cell proliferation. Involved in the columnar organization of spinal motor neurons. Promotes the formation of the lateral motor neuron column (LMC) and the preganglionic motor column (PGC) and is required for respective appropriate motor axon projections. The segment-appropriate generation of spinal cord motor columns requires cooperation with other Hox proteins. Can regulate PITX3 promoter activity; may promote midbrain identity in embryonic stem cell-derived dopamine neurons by regulating PITX3. Negatively regulates the differentiation of T follicular helper cells T(FH)s. Involved in maintenance of hair follicle stem cell quiescence; the function probably involves regulation of FGF18. Represses transcription of various pro-apoptotic genes and cooperates with NF-kappa B-signaling in promoting B-cell expansion by inhibition of caspase-dependent apoptosis. Binds to CSF1R promoter elements and is involved in regulation of monocyte differentiation and macrophage functions; repression of CSF1R in monocytes seems to involve NCOR2 as corepressor. Involved in endothelial cell proliferation, tube formation and migration indicative for a role in angiogenesis; the role in neovascularization seems to implicate suppression of SEMA5B. Can negatively regulate androgen receptor signaling. Acts as a transcriptional activator of the FBXL7 promoter; this activity is regulated by AURKA. This Rattus norvegicus (Rat) protein is Forkhead box protein P1 (Foxp1).